The following is a 240-amino-acid chain: Aspartate/glutamate leucyltransferase (240 aa).

This sequence belongs to the R-transferase family. Bpt subfamily.

It is found in the cytoplasm. The enzyme catalyses N-terminal L-glutamyl-[protein] + L-leucyl-tRNA(Leu) = N-terminal L-leucyl-L-glutamyl-[protein] + tRNA(Leu) + H(+). It catalyses the reaction N-terminal L-aspartyl-[protein] + L-leucyl-tRNA(Leu) = N-terminal L-leucyl-L-aspartyl-[protein] + tRNA(Leu) + H(+). Functions in the N-end rule pathway of protein degradation where it conjugates Leu from its aminoacyl-tRNA to the N-termini of proteins containing an N-terminal aspartate or glutamate. This chain is Aspartate/glutamate leucyltransferase, found in Gluconobacter oxydans (strain 621H) (Gluconobacter suboxydans).